A 540-amino-acid chain; its full sequence is L-aspartate oxidase (540 aa).

FAD contacts are provided by residues 16–19, lysine 38, 45–52, and aspartate 223; these read SGAA and STFYAQGG. Arginine 290 (proton donor/acceptor) is an active-site residue. FAD contacts are provided by residues glutamate 375 and 391 to 392; that span reads SL.

The protein belongs to the FAD-dependent oxidoreductase 2 family. NadB subfamily. It depends on FAD as a cofactor.

It is found in the cytoplasm. It carries out the reaction L-aspartate + O2 = iminosuccinate + H2O2. The enzyme catalyses fumarate + L-aspartate = iminosuccinate + succinate. It participates in cofactor biosynthesis; NAD(+) biosynthesis; iminoaspartate from L-aspartate (oxidase route): step 1/1. In terms of biological role, catalyzes the oxidation of L-aspartate to iminoaspartate, the first step in the de novo biosynthesis of NAD(+). Can use either oxygen or fumarate as electron acceptors, which allows the enzyme to be functional under aerobic and anaerobic conditions. The chain is L-aspartate oxidase (nadB) from Escherichia coli O157:H7.